An 84-amino-acid polypeptide reads, in one-letter code: Delta-thalatoxin-Tas1a (84 aa).

The signal sequence occupies residues 1 to 19; it reads MAYLKIVLVALMLVLAVSA. Residues 20 to 33 constitute a propeptide that is removed on maturation; the sequence is MRRPDQQDQDISVA. Cystine bridges form between C38/C78, C40/C68, and C61/C79.

Belongs to the sea anemone sodium channel inhibitory toxin family. Type II subfamily.

Its subcellular location is the secreted. The protein resides in the nematocyst. Its function is as follows. Binds specifically to the voltage-gated sodium channel (Nav) and delays its inactivation. The protein is Delta-thalatoxin-Tas1a of Thalassianthus aster (Fuzzy-tipped anemone).